The sequence spans 327 residues: Methionyl-tRNA formyltransferase (327 aa).

Residue 122–125 participates in (6S)-5,6,7,8-tetrahydrofolate binding; that stretch reads SLLP.

This sequence belongs to the Fmt family.

The catalysed reaction is L-methionyl-tRNA(fMet) + (6R)-10-formyltetrahydrofolate = N-formyl-L-methionyl-tRNA(fMet) + (6S)-5,6,7,8-tetrahydrofolate + H(+). Its function is as follows. Attaches a formyl group to the free amino group of methionyl-tRNA(fMet). The formyl group appears to play a dual role in the initiator identity of N-formylmethionyl-tRNA by promoting its recognition by IF2 and preventing the misappropriation of this tRNA by the elongation apparatus. The polypeptide is Methionyl-tRNA formyltransferase (Ralstonia nicotianae (strain ATCC BAA-1114 / GMI1000) (Ralstonia solanacearum)).